The sequence spans 74 residues: U3-agatoxin-Ao1b (74 aa).

Positions 1-20 (MKAAISLIIFFAILFVVIEA) are cleaved as a signal peptide. The propeptide occupies 21 to 34 (ISYEEGKELFQKER). Cystine bridges form between Cys37-Cys53, Cys44-Cys58, Cys52-Cys68, and Cys60-Cys66. The residue at position 72 (Ser72) is a Serine amide.

It belongs to the neurotoxin 07 (Beta/delta-agtx) family. 02 (aga-3) subfamily. In terms of tissue distribution, expressed by the venom gland.

It is found in the secreted. Insecticidal neurotoxin that induces an irreversible spastic paralysis when injected into insects. Modifies presynaptic voltage-gated sodium channels (Nav), causing them to open at the normal resting potential of the nerve. This leads to spontaneous release of neurotransmitter and repetitive action potentials in motor neurons. In Agelena orientalis (Funnel-web spider), this protein is U3-agatoxin-Ao1b.